The following is a 461-amino-acid chain: Early growth response factor homolog 1 (461 aa).

3 disordered regions span residues 1–25, 96–152, and 232–308; these read MALHEPPSKLNRHSHSNLLKPPSLN, TLMP…ELTL, and DVLH…YSSL. 4 stretches are compositionally biased toward polar residues: residues 96–105, 129–144, 249–265, and 272–291; these read TLMPAPSSSY, GSNSFGVPRMTNGNSK, LGSSLQNEHPQSNSRPS, and QRTNTSASLTRSMDHSSMSP. The span at 299 to 308 shows a compositional bias: low complexity; sequence YSNSASYSSL. 3 consecutive C2H2-type zinc fingers follow at residues 374–398, 404–426, and 432–454; these read YKCPRDGCDRRFSRSDELTRHIRIH, FQCRICMRAFSRSDHLTTHVRTH, and FSCDICGRKFARSDERKRHTKVH.

This sequence belongs to the EGR C2H2-type zinc-finger protein family. In terms of tissue distribution, expressed in sheath cells and distal tip cells of the somatic gonad, as well as in the intestine and sperm (at protein level). Expression not observed in oocytes (at protein level).

It localises to the nucleus. The protein localises to the cytoplasm. Its subcellular location is the perinuclear region. Sequence-specific DNA-binding transcription factor. Plays a role in oocyte development, acting cell-autonomously in the somatic gonad. Involved in negative regulation of oocyte MAPK activation and inhibits oocyte maturation and ovulation. The polypeptide is Early growth response factor homolog 1 (Caenorhabditis elegans).